Reading from the N-terminus, the 397-residue chain is MSDDEEYTSSEEEEVVEETREETKPPQTPAEGEGDPEFIKRQDQKRSDLDDQLKEYITEWRKQRSKEEDELKKLKEKQAKRKVTRAEEEQKMAQRKKEEEERRVREAEEKKQREIEEKRMRLEEAEKKRQAMLQAMKDKDKKGPNFTIAKKDAGVLGLSSAAMERNKTKEQLEEEKKISLSFRIKPLAIEGFGEAKLREKAQELWELIVKLETEKYDLEERQKRQDYDLKELKERQKQQLRHKALKKGLDPEALTGKYPPKIQVASKYERRVDTRSYDDKKKLFEGGWDEISKDSNEKIWNEKKEQYTGRQKSKLPKWFGERPGKKAGEPETPEGEEDAKADEDIVEDDEEVEEEVVEEEDEEAEEDEEEEEEEEEEEEEEEEEEEEEEEEEEEEEE.

A compositionally biased stretch (acidic residues) spans 1 to 16 (MSDDEEYTSSEEEEVV). Disordered stretches follow at residues 1–148 (MSDD…NFTI), 234–261 (ERQK…YPPK), and 294–397 (DSNE…EEEE). Composition is skewed to basic and acidic residues over residues 37–77 (EFIK…LKEK), 84–129 (TRAE…EKKR), and 136–148 (MKDK…NFTI). Basic and acidic residues-rich tracts occupy residues 294-307 (DSNE…KEQY) and 319-329 (FGERPGKKAGE). Residues 331–397 (ETPEGEEDAK…EEEEEEEEEE (67 aa)) show a composition bias toward acidic residues.

This sequence belongs to the troponin T family. Post-translationally, some glutamate residues are polyglycylated by TTLL3B. This modification occurs exclusively on glutamate residues and results in polyglycine chains on the gamma-carboxyl group. As to expression, isoform 3 is expressed in the hypoderm. Isoform 8 is expressed in the dorsal vessel. Isoform 6 is expressed in adult TDT muscle and isoform 9 in adult IFM, flight and jump muscles.

Its function is as follows. Troponin T is the tropomyosin-binding subunit of troponin, the thin filament regulatory complex which confers calcium-sensitivity to striated muscle actomyosin ATPase activity. The sequence is that of Troponin T, skeletal muscle (up) from Drosophila melanogaster (Fruit fly).